We begin with the raw amino-acid sequence, 92 residues long: N(2)-fixation sustaining protein CowN (92 aa).

Belongs to the CowN family.

In terms of biological role, is required to sustain N(2)-dependent growth in the presence of low levels of carbon monoxide (CO). Probably acts by protecting the N(2) fixation ability of the nitrogenase complex, which is inactivated in the presence of CO. The polypeptide is N(2)-fixation sustaining protein CowN (Rhodopseudomonas palustris (strain ATCC BAA-98 / CGA009)).